The sequence spans 379 residues: Alcohol dehydrogenase 1 (379 aa).

Positions 47, 49, 69, 99, 102, 105, 113, and 177 each coordinate Zn(2+). An alcohol contacts are provided by Thr49 and His69. Thr49 provides a ligand contact to NAD(+). NAD(+)-binding positions include 202-207, Asp226, Arg231, Thr272, Val295, 295-297, Phe322, and Arg372; these read GLGAVG and VGV.

It belongs to the zinc-containing alcohol dehydrogenase family. Homodimer. Requires Zn(2+) as cofactor.

It localises to the cytoplasm. It carries out the reaction a primary alcohol + NAD(+) = an aldehyde + NADH + H(+). The enzyme catalyses a secondary alcohol + NAD(+) = a ketone + NADH + H(+). The protein is Alcohol dehydrogenase 1 (ADH1) of Hordeum vulgare (Barley).